Reading from the N-terminus, the 186-residue chain is MSATANLKKDYQERIVPALMKQFGYTSVMQVPVLKKIVINQGLGMATGDKKIIDVAVSELTAITGQKAVPTVSKKDISNFKLRKKMPIGVMVTLRREQMYEFLERLVRIALPRIRDFKGIESKLDGRGNYTLGINEQIIFPEINIDAITKILGMNITFVTSAQSDEEGYALLKEFGLPFKNAKKQN.

The protein belongs to the universal ribosomal protein uL5 family. In terms of assembly, part of the 50S ribosomal subunit; part of the 5S rRNA/L5/L18/L25 subcomplex. Contacts the 5S rRNA and the P site tRNA. Forms a bridge to the 30S subunit in the 70S ribosome.

Functionally, this is one of the proteins that bind and probably mediate the attachment of the 5S RNA into the large ribosomal subunit, where it forms part of the central protuberance. In the 70S ribosome it contacts protein S13 of the 30S subunit (bridge B1b), connecting the 2 subunits; this bridge is implicated in subunit movement. Contacts the P site tRNA; the 5S rRNA and some of its associated proteins might help stabilize positioning of ribosome-bound tRNAs. The polypeptide is Large ribosomal subunit protein uL5 (Porphyromonas gingivalis (strain ATCC 33277 / DSM 20709 / CIP 103683 / JCM 12257 / NCTC 11834 / 2561)).